Here is a 636-residue protein sequence, read N- to C-terminus: 1-deoxy-D-xylulose-5-phosphate synthase (636 aa).

Residues histidine 74 and 115 to 117 contribute to the thiamine diphosphate site; that span reads GHA. Aspartate 146 provides a ligand contact to Mg(2+). Thiamine diphosphate is bound by residues 147–148, asparagine 175, tyrosine 285, and glutamate 368; that span reads GA. Residue asparagine 175 coordinates Mg(2+).

The protein belongs to the transketolase family. DXPS subfamily. In terms of assembly, homodimer. Mg(2+) serves as cofactor. Thiamine diphosphate is required as a cofactor.

The catalysed reaction is D-glyceraldehyde 3-phosphate + pyruvate + H(+) = 1-deoxy-D-xylulose 5-phosphate + CO2. The protein operates within metabolic intermediate biosynthesis; 1-deoxy-D-xylulose 5-phosphate biosynthesis; 1-deoxy-D-xylulose 5-phosphate from D-glyceraldehyde 3-phosphate and pyruvate: step 1/1. Catalyzes the acyloin condensation reaction between C atoms 2 and 3 of pyruvate and glyceraldehyde 3-phosphate to yield 1-deoxy-D-xylulose-5-phosphate (DXP). The chain is 1-deoxy-D-xylulose-5-phosphate synthase from Anaeromyxobacter dehalogenans (strain 2CP-C).